The following is a 75-amino-acid chain: uncharacterized protein (75 aa).

The span at 19–38 shows a compositional bias: polar residues; the sequence is FHNTAPSKTNVNVPRANKSQ. Residues 19–42 are disordered; that stretch reads FHNTAPSKTNVNVPRANKSQSKGK. Residues 47 to 66 form a helical membrane-spanning segment; it reads LLVLVGTLALVTSVISVNYQ.

The protein resides in the membrane. This is an uncharacterized protein from Saccharomyces cerevisiae (strain ATCC 204508 / S288c) (Baker's yeast).